A 51-amino-acid polypeptide reads, in one-letter code: Mating pheromone Er-23 (51 aa).

Disulfide bonds link Cys3/Cys24, Cys6/Cys16, Cys13/Cys47, Cys27/Cys40, and Cys35/Cys51.

The protein localises to the secreted. In terms of biological role, mating ciliate pheromones (or gamones) are diffusible extracellular communication signals that distinguish different intraspecific classes of cells commonly referred to as 'mating types'. They prepare the latter for conjugation by changing their cell surface properties. This is Mating pheromone Er-23 (MAT23) from Euplotes raikovi.